The following is a 522-amino-acid chain: MEELQGYLEKDGSRQQPFLYPLLFQEYIYALAHDRGFKGSLFYEPAEVFGYDSKSSLALVKRLIIRIYQQNDFLSAVHDSNKNQFVSHHHKNLGYSHFYSQMISEGFAILVEIPFSLRLVSYFEKKEIPKSHNLRSIHSIFPFLEDKLLHLNYVSDILIPHPIHMEILVQILQCWIQDVPLLHFLLFFLHKYHNWNSFLITPKKSIYVFSKENKRLFRFLYNSYVSECEFLLVFLRKQSSYLRLTSFGPFLERRHFYVKMEHLQMQHLILIVVCRDYFQGTLWSYXXXXXXXXXXXXXVILASKGTHLLMKKWKYNFVNLWQYYFHFWYQSYRIHINQLSNHSFYFLGYLSSLPRNSSTVRNQMLENSFIIDTVTKKFETIVPVIFLIGSLSKAQFCTVSGHPISKPIWADLSDSEIIERFGRMCRNLSHYHSGSSKKQGLHRIKYILRLSCARTLARKHKSTVRTFLRRLGSGLLEEFFTEEEQVLSFILPKTIPFTFYGSHKERIWYLDIIRINDLVNHS.

The protein belongs to the intron maturase 2 family. MatK subfamily.

Its subcellular location is the plastid. The protein resides in the chloroplast. Its function is as follows. Usually encoded in the trnK tRNA gene intron. Probably assists in splicing its own and other chloroplast group II introns. The chain is Maturase K from Iris orientalis (Yellowband iris).